Reading from the N-terminus, the 263-residue chain is Oxidoreductase UcpA (263 aa).

Position 10–32 (Leu10–Asn32) interacts with NAD(+). A substrate-binding site is contributed by Ser141. The active-site Proton acceptor is the Tyr155.

Belongs to the short-chain dehydrogenases/reductases (SDR) family.

In Escherichia coli (strain K12), this protein is Oxidoreductase UcpA (ucpA).